The chain runs to 425 residues: Imidazolonepropionase (425 aa).

Residues His82 and His84 each contribute to the Fe(3+) site. Zn(2+) is bound by residues His82 and His84. 4-imidazolone-5-propanoate contacts are provided by Arg91, Tyr154, and His187. Residue Tyr154 coordinates N-formimidoyl-L-glutamate. His253 is a Fe(3+) binding site. His253 contributes to the Zn(2+) binding site. Residue Glu256 coordinates 4-imidazolone-5-propanoate. Asp328 lines the Fe(3+) pocket. Asp328 contributes to the Zn(2+) binding site. N-formimidoyl-L-glutamate contacts are provided by Asn330 and Gly332. Ser333 serves as a coordination point for 4-imidazolone-5-propanoate.

This sequence belongs to the metallo-dependent hydrolases superfamily. HutI family. Zn(2+) is required as a cofactor. Fe(3+) serves as cofactor.

The protein resides in the cytoplasm. It carries out the reaction 4-imidazolone-5-propanoate + H2O = N-formimidoyl-L-glutamate. Its pathway is amino-acid degradation; L-histidine degradation into L-glutamate; N-formimidoyl-L-glutamate from L-histidine: step 3/3. Functionally, catalyzes the hydrolytic cleavage of the carbon-nitrogen bond in imidazolone-5-propanoate to yield N-formimidoyl-L-glutamate. It is the third step in the universal histidine degradation pathway. This Symbiobacterium thermophilum (strain DSM 24528 / JCM 14929 / IAM 14863 / T) protein is Imidazolonepropionase.